The primary structure comprises 160 residues: MGVTKKPDLNDPVLRAKLAKGMGHNYYGEPAWPNDLLYIFPVVILGTIACNVGLAVLEPSMIGEPADPFATPLEILPEWYFFPVFQILRTVPNKLLGVLLMVSVPTGLLTVPFLENVNKFQNPFRRPVATTVFLIGTAVALWLGIGATLPIEKSLTLGLF.

3 helical membrane-spanning segments follow: residues 36-56 (LLYIFPVVILGTIACNVGLAV), 95-115 (LLGVLLMVSVPTGLLTVPFLE), and 131-151 (TVFLIGTAVALWLGIGATLPI).

This sequence belongs to the cytochrome b family. PetD subfamily. In terms of assembly, the 4 large subunits of the cytochrome b6-f complex are cytochrome b6, subunit IV (17 kDa polypeptide, petD), cytochrome f and the Rieske protein, while the 4 small subunits are petG, petL, petM and petN. The complex functions as a dimer.

It localises to the plastid. It is found in the chloroplast thylakoid membrane. In terms of biological role, component of the cytochrome b6-f complex, which mediates electron transfer between photosystem II (PSII) and photosystem I (PSI), cyclic electron flow around PSI, and state transitions. This chain is Cytochrome b6-f complex subunit 4, found in Oryza sativa (Rice).